Reading from the N-terminus, the 116-residue chain is Aspartate 1-decarboxylase (116 aa).

S25 serves as the catalytic Schiff-base intermediate with substrate; via pyruvic acid. S25 carries the pyruvic acid (Ser) modification. Substrate is bound at residue T57. Y58 (proton donor) is an active-site residue. 73–75 (GAA) contacts substrate.

The protein belongs to the PanD family. Heterooctamer of four alpha and four beta subunits. Requires pyruvate as cofactor. Is synthesized initially as an inactive proenzyme, which is activated by self-cleavage at a specific serine bond to produce a beta-subunit with a hydroxyl group at its C-terminus and an alpha-subunit with a pyruvoyl group at its N-terminus.

It is found in the cytoplasm. It carries out the reaction L-aspartate + H(+) = beta-alanine + CO2. The protein operates within cofactor biosynthesis; (R)-pantothenate biosynthesis; beta-alanine from L-aspartate: step 1/1. Functionally, catalyzes the pyruvoyl-dependent decarboxylation of aspartate to produce beta-alanine. This is Aspartate 1-decarboxylase from Fervidobacterium nodosum (strain ATCC 35602 / DSM 5306 / Rt17-B1).